The sequence spans 156 residues: Small ribosomal subunit protein uS7 (156 aa).

The protein belongs to the universal ribosomal protein uS7 family. As to quaternary structure, part of the 30S ribosomal subunit. Contacts proteins S9 and S11.

One of the primary rRNA binding proteins, it binds directly to 16S rRNA where it nucleates assembly of the head domain of the 30S subunit. Is located at the subunit interface close to the decoding center, probably blocks exit of the E-site tRNA. The chain is Small ribosomal subunit protein uS7 from Metamycoplasma arthritidis (strain 158L3-1) (Mycoplasma arthritidis).